Reading from the N-terminus, the 361-residue chain is D-alanine--D-alanine ligase (361 aa).

Residues 134–344 (KLLLKSFDIP…FKDLVDNLID (211 aa)) form the ATP-grasp domain. Residue 167–222 (KEVLGYPVIVKPAVLGSSIGINVAYSENQIESFIKEALKYDLTIVIEKFIEAREIE) coordinates ATP. The Mg(2+) site is built by D297, E311, and N313.

It belongs to the D-alanine--D-alanine ligase family. Mg(2+) serves as cofactor. It depends on Mn(2+) as a cofactor.

It is found in the cytoplasm. The enzyme catalyses 2 D-alanine + ATP = D-alanyl-D-alanine + ADP + phosphate + H(+). Its pathway is cell wall biogenesis; peptidoglycan biosynthesis. Functionally, cell wall formation. The chain is D-alanine--D-alanine ligase from Borreliella burgdorferi (strain ZS7) (Borrelia burgdorferi).